Consider the following 201-residue polypeptide: Large ribosomal subunit protein uL4 (201 aa).

Residues 44–68 (KAQKTRSEVAGTTKKSKKQKGGGAR) form a disordered region.

The protein belongs to the universal ribosomal protein uL4 family. In terms of assembly, part of the 50S ribosomal subunit.

In terms of biological role, one of the primary rRNA binding proteins, this protein initially binds near the 5'-end of the 23S rRNA. It is important during the early stages of 50S assembly. It makes multiple contacts with different domains of the 23S rRNA in the assembled 50S subunit and ribosome. Forms part of the polypeptide exit tunnel. This is Large ribosomal subunit protein uL4 from Xanthomonas oryzae pv. oryzae (strain MAFF 311018).